Consider the following 432-residue polypeptide: Asparagine--tRNA ligase (432 aa).

Belongs to the class-II aminoacyl-tRNA synthetase family. Homodimer.

It is found in the cytoplasm. The enzyme catalyses tRNA(Asn) + L-asparagine + ATP = L-asparaginyl-tRNA(Asn) + AMP + diphosphate + H(+). The sequence is that of Asparagine--tRNA ligase from Lactobacillus delbrueckii subsp. bulgaricus (strain ATCC 11842 / DSM 20081 / BCRC 10696 / JCM 1002 / NBRC 13953 / NCIMB 11778 / NCTC 12712 / WDCM 00102 / Lb 14).